The chain runs to 379 residues: Peritrophin-48 (379 aa).

The N-terminal stretch at 1–20 (MKAKTLTATLALILLAFAQA) is a signal peptide. 2 Chitin-binding type-2 domains span residues 25–83 (ASYC…NCFF) and 86–143 (ANPC…NTGN). 2 cysteine pairs are disulfide-bonded: Cys60–Cys73 and Cys120–Cys133. 2 N-linked (GlcNAc...) asparagine glycosylation sites follow: Asn150 and Asn168. Chitin-binding type-2 domains are found at residues 151–208 (LSVC…ACSR), 224–283 (TSPC…RTLK), and 285–356 (CNRC…ACEN). A disulfide bridge connects residues Cys185 and Cys198. N-linked (GlcNAc...) asparagine glycans are attached at residues Asn247 and Asn252. Cys324 and Cys337 are disulfide-bonded. Asn341, Asn356, and Asn373 each carry an N-linked (GlcNAc...) asparagine glycan.

In terms of processing, glycosylated. In terms of tissue distribution, larval peritrophic membrane.

Binds chitin and may bind related oligosaccharide structures. The chain is Peritrophin-48 from Chrysomya bezziana (Old world screw-worm fly).